The primary structure comprises 590 residues: ATP-dependent lipid A-core flippase (590 aa).

Helical transmembrane passes span 31–51, 74–94, 132–152, 159–179, 259–279, and 286–306; these read IFIAAILAMAVVAASEGVIPK, AILTGVALIRGVAQFASGYLL, AVIFEVNQVLSILTSVFITLV, VALLIYLFYTNWRLTLIVSVI, VTAFLAALALSVIITIAMIQA, and IGGFTGFVMAMLLLISPLKHL. One can recognise an ABC transmembrane type-1 domain in the interval 33–315; it reads IAAILAMAVV…LTDINQPLTR (283 aa). In terms of domain architecture, ABC transporter spans 347–585; the sequence is LVFERVGFRY…NGLYAGLHRI (239 aa). Residue 381–388 participates in ATP binding; the sequence is GPSGSGKT.

The protein belongs to the ABC transporter superfamily. Lipid exporter (TC 3.A.1.106) family. Homodimer.

It localises to the cell inner membrane. It carries out the reaction ATP + H2O + lipid A-core oligosaccharideSide 1 = ADP + phosphate + lipid A-core oligosaccharideSide 2.. Involved in lipopolysaccharide (LPS) biosynthesis. Translocates lipid A-core from the inner to the outer leaflet of the inner membrane. Transmembrane domains (TMD) form a pore in the inner membrane and the ATP-binding domain (NBD) is responsible for energy generation. In Cupriavidus pinatubonensis (strain JMP 134 / LMG 1197) (Cupriavidus necator (strain JMP 134)), this protein is ATP-dependent lipid A-core flippase.